Here is a 64-residue protein sequence, read N- to C-terminus: DNA gyrase inhibitor YacG (64 aa).

Zn(2+) contacts are provided by C9, C12, C28, and C32. The interval 45–64 (KRIPSAGDLSDSDDWSEQQP) is disordered. The span at 54–64 (SDSDDWSEQQP) shows a compositional bias: acidic residues.

It belongs to the DNA gyrase inhibitor YacG family. Interacts with GyrB. It depends on Zn(2+) as a cofactor.

Its function is as follows. Inhibits all the catalytic activities of DNA gyrase by preventing its interaction with DNA. Acts by binding directly to the C-terminal domain of GyrB, which probably disrupts DNA binding by the gyrase. The sequence is that of DNA gyrase inhibitor YacG from Klebsiella pneumoniae subsp. pneumoniae (strain ATCC 700721 / MGH 78578).